The primary structure comprises 386 residues: MESPNKMLRVRTQHPIISIVNGVLVDLPAPSNISYYWNFGSLLGLCLVIQLITGIFLAMHYCPDVSLAFDSISHILRDVNHGFMLKYIHANGASLFFLCVYIHMGRGLYYGSYMKMDVWNIGVIIYLVMMLTAFLGYVLPWGQMSFWGATVITNFCSAIPYVGTDVVQWIWGGFSVSNATLNRFFSLHYLFPFLIAGLGVLHILSLHTAGSNNPLGIDSNIDKVTFHVYYTYKDLFGIMVLSSILVILCYFMPNVLGDPENFIQANPLVTPVHIQPEWYFLFAYAILRSIPNKLGGVLAMVFSILVLLLLPFIHTSKLRALTFRPLGKIAFWFLVADFILLTWLGANPVEEPYIMIGQFASLFYFCYFLVLVPLLGWAETTLLRMK.

Helical transmembrane passes span 39 to 59 (FGSL…FLAM), 83 to 104 (FMLK…YIHM), 119 to 139 (WNIG…GYVL), and 184 to 204 (FFSL…LHIL). Heme b-binding residues include His-89 and His-103. Heme b-binding residues include His-188 and His-202. His-207 lines the a ubiquinone pocket. Helical transmembrane passes span 232–252 (YKDL…CYFM), 294–314 (LGGV…PFIH), 326–346 (LGKI…WLGA), and 353–374 (YIMI…LVPL).

It belongs to the cytochrome b family. In terms of assembly, the main subunits of complex b-c1 are: cytochrome b, cytochrome c1 and the Rieske protein. Requires heme b as cofactor.

The protein resides in the mitochondrion inner membrane. Component of the ubiquinol-cytochrome c reductase complex (complex III or cytochrome b-c1 complex) that is part of the mitochondrial respiratory chain. The b-c1 complex mediates electron transfer from ubiquinol to cytochrome c. Contributes to the generation of a proton gradient across the mitochondrial membrane that is then used for ATP synthesis. This Sarcophyton glaucum (Toadstool umbrella leather coral) protein is Cytochrome b (MT-CYB).